Consider the following 229-residue polypeptide: Potassium/proton antiporter CemA (229 aa).

Transmembrane regions (helical) follow at residues 6–26, 107–127, and 189–209; these read AFIP…ISLC, ILHF…SFWG, and ILSG…KYWI.

Belongs to the CemA family.

The protein resides in the plastid. Its subcellular location is the chloroplast inner membrane. The catalysed reaction is K(+)(in) + H(+)(out) = K(+)(out) + H(+)(in). In terms of biological role, contributes to K(+)/H(+) antiport activity by supporting proton efflux to control proton extrusion and homeostasis in chloroplasts in a light-dependent manner to modulate photosynthesis. Prevents excessive induction of non-photochemical quenching (NPQ) under continuous-light conditions. Indirectly promotes efficient inorganic carbon uptake into chloroplasts. This chain is Potassium/proton antiporter CemA, found in Draba nemorosa (Woodland whitlowgrass).